Here is a 649-residue protein sequence, read N- to C-terminus: DNA mismatch repair protein MutL (649 aa).

Belongs to the DNA mismatch repair MutL/HexB family.

Functionally, this protein is involved in the repair of mismatches in DNA. It is required for dam-dependent methyl-directed DNA mismatch repair. May act as a 'molecular matchmaker', a protein that promotes the formation of a stable complex between two or more DNA-binding proteins in an ATP-dependent manner without itself being part of a final effector complex. This chain is DNA mismatch repair protein MutL, found in Streptococcus pneumoniae serotype 2 (strain D39 / NCTC 7466).